A 125-amino-acid chain; its full sequence is MSWQTYVDEQLVGTGQLDGAIIIGLDGNSWASKNLTLKAGEGQAIAALFKTPANVFASGITINGIKYMGIKGDSRSIYGKKGATGVATVITGQCILIGYYNEKQQPGNAALVVEKLADYLIENGY.

Residue Ser2 is modified to N-acetylserine.

The protein belongs to the profilin family. Occurs in many kinds of cells as a complex with monomeric actin in a 1:1 ratio.

The protein resides in the cytoplasm. The protein localises to the cytoskeleton. Its function is as follows. Binds to actin and affects the structure of the cytoskeleton. At high concentrations, profilin prevents the polymerization of actin, whereas it enhances it at low concentrations. By binding to PIP2, it inhibits the formation of IP3 and DG. This chain is Profilin-P (PROP), found in Physarum polycephalum (Slime mold).